The primary structure comprises 790 residues: MSLFGSSPPNDGSAALNPAKTANSSRSTLFDNEAPTTRSGSALFADDDHDSPWDMPTPRKQRSRADLIRNLLPSGDVPESYIETFDAVVRTENRSTNGRITAGGVARTLAAAKLGADDQARIMGIIAPASASATGAGGGGDGAHGGEANSSAAAAAAAVGLGDLGRNEFNVLLALIGLVQEGEVASLDGVDERRRNLPQPKLQGLVNENVQPMLPNLSELGAKPPQRPVTPPKAPTPSPPKQQQQQQHQPPTLRKVSMEYPEDPWNAPDLHKGHNHGPLEHSTGHNGAADVPRSVANDLNGNDAVSYSTSPEVTTTSSALPGRTTSTFTTSQPPSGPSSIHNVAESIQESNGAWNYFPGSSSGGGFGEPADNAITGPFGDSGGPGQSVSGSVGGSNPNRSIGHVRSGSNVEENILVTLMPEKEGVFMFQHHNYEVSSIRRGSKVVRRYSDFVWLLDCLHKRYPFRVLPLLPPKRVAFNGNHLSNDGAFIEKRRRGLARFLNALVRHPVLGQEQLVIMFLTVPTELSVWRKQATISVQDEFTGRTLPPGLEDSLPPTLEELFARTRVGVRRSAELYISTCTIMDRLIKRSEGVAADHARMAVSLISLTETSADTYATDHNDVPLLNDGLQAMGRHLRTAQTLMEDEAKAWEEGVLEDLKRQRDALVSLRDMFDRRDRLDKDNIPFLQRRIETNEAKLQALNAKPEGMVKPGEKERVVEAIIKDKESIVTQHNRSVFVKECIRDELRFFQNTQYNVSRLTQDWAQERVKYSEMLADNWRRLLDDLEGMPLGD.

Composition is skewed to polar residues over residues 1-10 and 20-40; these read MSLFGSSPPN and KTAN…TRSG. 3 disordered regions span residues 1–62, 215–342, and 373–406; these read MSLF…RKQR, PNLS…SIHN, and AITG…HVRS. Residues 225–240 are compositionally biased toward pro residues; the sequence is PQRPVTPPKAPTPSPP. The segment covering 241–252 has biased composition (low complexity); sequence KQQQQQQHQPPT. A compositionally biased stretch (basic and acidic residues) spans 269–283; it reads DLHKGHNHGPLEHST. A compositionally biased stretch (polar residues) spans 297 to 319; it reads NDLNGNDAVSYSTSPEVTTTSSA. Low complexity-rich tracts occupy residues 324–339 and 386–400; these read TTST…GPSS and QSVS…PNRS. A PX domain is found at 411-525; sequence EENILVTLMP…IMFLTVPTEL (115 aa). R447, S449, K473, and R492 together coordinate a 1,2-diacyl-sn-glycero-3-phospho-(1D-myo-inositol-3-phosphate).

It belongs to the sorting nexin family.

The protein resides in the cytoplasm. It localises to the membrane. Functionally, required for vacuolar protein sorting. The chain is Sorting nexin mvp1 (vsp-1) from Neurospora crassa (strain ATCC 24698 / 74-OR23-1A / CBS 708.71 / DSM 1257 / FGSC 987).